Here is a 616-residue protein sequence, read N- to C-terminus: Protein SpAN (616 aa).

The N-terminal stretch at 1–16 (MKLVLLLAGFAALAKC) is a signal peptide. The propeptide at 17-93 (SLAAPAGVQK…DQKAGRKKRK (77 aa)) is activation peptide. The interval 30-67 (METSAPEKPSEATTLGLLKTPKPEPKDEEPSPGAFQGD) is disordered. The Peptidase M12A domain occupies 93–294 (KATIYESQRW…ELANRIYECD (202 aa)). 6 disulfide bridges follow: cysteine 134–cysteine 293, cysteine 162–cysteine 182, cysteine 299–cysteine 317, cysteine 319–cysteine 328, cysteine 340–cysteine 366, and cysteine 393–cysteine 413. Residue histidine 190 coordinates Zn(2+). Glutamate 191 is an active-site residue. The Zn(2+) site is built by histidine 194 and histidine 200. Residues 289–329 (RIYECDDVEDCSNADECLNGGYHDADCDCVCPSSYSGDLCQ) form the EGF-like domain. The CUB 1 domain maps to 340–450 (CSYRFTEMTG…RGFKATYVII (111 aa)). The disordered stretch occupies residues 461–491 (TLQTTPPSTTTLQTTNPSTTTLQTTNPSTTT). Disulfide bonds link cysteine 503–cysteine 529 and cysteine 556–cysteine 576. The region spanning 503–614 (CGGTFVGVEG…RGFVASYRAI (112 aa)) is the CUB 2 domain.

The cofactor is Zn(2+). As to expression, asymmetrically along the animal-vegetal axis of the blastula.

The sequence is that of Protein SpAN (SPAN) from Strongylocentrotus purpuratus (Purple sea urchin).